The primary structure comprises 145 residues: Protein SprT-like (145 aa).

Positions 4–140 constitute a SprT-like domain; sequence TNYVQEVSLA…VCGNCHGKLM (137 aa). Zn(2+) is bound at residue His-64. Residue Glu-65 is part of the active site. His-68 contributes to the Zn(2+) binding site.

This sequence belongs to the SprT family. The cofactor is Zn(2+).

It is found in the cytoplasm. This is Protein SprT-like from Streptococcus pyogenes serotype M3 (strain SSI-1).